We begin with the raw amino-acid sequence, 116 residues long: Ribosome-binding factor A (116 aa).

This sequence belongs to the RbfA family. As to quaternary structure, monomer. Binds 30S ribosomal subunits, but not 50S ribosomal subunits or 70S ribosomes.

The protein localises to the cytoplasm. Functionally, one of several proteins that assist in the late maturation steps of the functional core of the 30S ribosomal subunit. Associates with free 30S ribosomal subunits (but not with 30S subunits that are part of 70S ribosomes or polysomes). Required for efficient processing of 16S rRNA. May interact with the 5'-terminal helix region of 16S rRNA. This Mycoplasma pneumoniae (strain ATCC 29342 / M129 / Subtype 1) (Mycoplasmoides pneumoniae) protein is Ribosome-binding factor A.